Reading from the N-terminus, the 497-residue chain is MDMHCKADPFSAMHPGHGGVNQLGGVFVNGRPLPDVVRQRIVELAHQGVRPCDISRQLRVSHGCVSKILGRYYETGSIKPGVIGGSKPKVATPKVVDKIAEYKRQNPTMFAWEIRDRLLAEGICDNDTVPSVSSINRIIRTKVQQPFHPTPDGSGTPVGTPGHTLVPSTASPPVSSASNDPVGSYSINGILGIPRSNGEKRKRDEDGSDGSGPNGDSQSSVESLRKHLRADNFTQQQLEALDRVFERPSYPDVFQTAEHIKSEQASEYSLPALTPGLDEVKSSLSASGNADLGSNVSGPQSYPVVTESFASHLYVKQEPHEASLTPFTPSSLASSGLADIQPFQMALTVDASTPTYSSFTHHGPHYGQFGSQPLIAGRDMSSTTLPGYPPHVPPTGQGSYPTSTLAGMVPGTNVSVHHSVQPVECCSCLSSSKPCLFHCRTGSGSEFSGNPYSHPQYTTYNEAWRFSNPALLSSPYYYSATSRGSAPPTAATAYDRH.

Residues 16–142 constitute a DNA-binding region (paired); sequence GHGGVNQLGG…SSINRIIRTK (127 aa). The segment at 19–75 is PAI subdomain; that stretch reads GVNQLGGVFVNGRPLPDVVRQRIVELAHQGVRPCDISRQLRVSHGCVSKILGRYYET. Residues 94 to 142 are RED subdomain; sequence KVVDKIAEYKRQNPTMFAWEIRDRLLAEGICDNDTVPSVSSINRIIRTK. Residues 143 to 224 form a disordered region; sequence VQQPFHPTPD…GDSQSSVESL (82 aa). A compositionally biased stretch (low complexity) spans 166–178; it reads VPSTASPPVSSAS.

Expression becomes spatially localized at mid-gastrula stages and is confined to the nervous system (midbrain, hindbrain, spinal cord), sensory organs (optic vesicle and stalk, otic vesicle), visceral arches, developing excretory system (pronephros, pronephric duct, rectal diverticulum, proctodaeum) and thyroid gland. Splicing does not appear to be tissue-specific and tissues displayed the same spectrum of splice variants.

Its subcellular location is the nucleus. Probable transcription factor. Involved in kidney development, acting synergistically with lhx1/lim-1 in pronephric morphogenesis during the tailbud stages. This Xenopus laevis (African clawed frog) protein is Paired box protein Pax-2-A (pax2-a).